The primary structure comprises 1241 residues: RNA polymerase II C-terminal domain phosphatase-like 3 (1241 aa).

Disordered regions lie at residues 361–402 (DHDA…TTEG), 428–470 (VFKT…HLIY), 505–525 (ISAP…RDPR), 578–598 (KRQK…WLED), 677–702 (AIQK…VSTP), 720–800 (VLQD…QNGT), and 852–885 (TERD…GPTR). Over residues 368-378 (PSPTRETTPSL) the composition is skewed to polar residues. Low complexity predominate over residues 441 to 466 (GEPNDGNGDVGGEVSSSVVKSSNPGS). A compositionally biased stretch (basic and acidic residues) spans 677-686 (AIQKPMDPRR). Polar residues-rich tracts occupy residues 691 to 702 (PGSSVQPGVSTP) and 791 to 800 (PRQNISQNGT). The segment covering 871-881 (SVSAASVTAAA) has biased composition (low complexity). The 181-residue stretch at 923 to 1103 (FASQKLSLVL…GLLGPSLLEL (181 aa)) folds into the FCP1 homology domain. Residues 1146–1239 (EQRKILAGCR…QRANENLYAI (94 aa)) form the BRCT domain.

In terms of assembly, interacts with RAP74. Requires Mg(2+) as cofactor. Co(2+) is required as a cofactor. It depends on Mn(2+) as a cofactor.

Its subcellular location is the nucleus. It carries out the reaction O-phospho-L-seryl-[protein] + H2O = L-seryl-[protein] + phosphate. It catalyses the reaction O-phospho-L-threonyl-[protein] + H2O = L-threonyl-[protein] + phosphate. In terms of biological role, completely dephosphorylates 'Ser-2', and partially 'Ser-5' and 'Ser-7' of the heptad repeats YSPTSPS in the C-terminal domain (CTD) of the largest RNA polymerase II subunit (RPB1). Involved in defense response. Acts as a negative regulator of immune gene expression and immunity to pathogen infections. Preferentially dephosphorylates 'Ser-2' of RNA polymerase II CTD. This counterregulates the MAP kinase (MAPK) or cyclin-dependent kinase C (CDKC)-mediated phosphorylation of CTD in response to pathogens and upon perception of microbe-associated molecular patterns (MAMPs). MAPKs phosphorylate and activate CDKCs, which are CTD kinases that positively regulate plant innate immunity. Acts as a negative regulator of stress gene transcription involved in abscisic acid (ABA) mediated signaling pathway and cold resistance. Acts as a post-transcriptional gene silencing (PTGS) suppressor. The polypeptide is RNA polymerase II C-terminal domain phosphatase-like 3 (Arabidopsis thaliana (Mouse-ear cress)).